We begin with the raw amino-acid sequence, 206 residues long: Ribosomal RNA large subunit methyltransferase E (206 aa).

Positions 60, 62, 80, 96, and 121 each coordinate S-adenosyl-L-methionine. Catalysis depends on K161, which acts as the Proton acceptor.

The protein belongs to the class I-like SAM-binding methyltransferase superfamily. RNA methyltransferase RlmE family.

The protein localises to the cytoplasm. The catalysed reaction is uridine(2552) in 23S rRNA + S-adenosyl-L-methionine = 2'-O-methyluridine(2552) in 23S rRNA + S-adenosyl-L-homocysteine + H(+). Its function is as follows. Specifically methylates the uridine in position 2552 of 23S rRNA at the 2'-O position of the ribose in the fully assembled 50S ribosomal subunit. The polypeptide is Ribosomal RNA large subunit methyltransferase E (Saccharophagus degradans (strain 2-40 / ATCC 43961 / DSM 17024)).